Consider the following 201-residue polypeptide: Small ribosomal subunit protein uS4c (201 aa).

The interval 15–43 is disordered; it reads LGALPGLTNKRPRAGSDLRNQSRSGKKSQ. One can recognise an S4 RNA-binding domain in the interval 89 to 152; that stretch reads MRLDNILFRL…NSRTLIQNSL (64 aa).

Belongs to the universal ribosomal protein uS4 family. Part of the 30S ribosomal subunit. Contacts protein S5. The interaction surface between S4 and S5 is involved in control of translational fidelity.

It localises to the plastid. It is found in the chloroplast. One of the primary rRNA binding proteins, it binds directly to 16S rRNA where it nucleates assembly of the body of the 30S subunit. Functionally, with S5 and S12 plays an important role in translational accuracy. In Panax ginseng (Korean ginseng), this protein is Small ribosomal subunit protein uS4c (rps4).